Reading from the N-terminus, the 223-residue chain is Small ribosomal subunit protein uS3 (223 aa).

The region spanning 38-106 is the KH type-2 domain; it reads IKKYLKSKLA…EVHLNIVEIR (69 aa).

The protein belongs to the universal ribosomal protein uS3 family. In terms of assembly, part of the 30S ribosomal subunit. Forms a tight complex with proteins S10 and S14.

Functionally, binds the lower part of the 30S subunit head. Binds mRNA in the 70S ribosome, positioning it for translation. The chain is Small ribosomal subunit protein uS3 from Rhodospirillum rubrum (strain ATCC 11170 / ATH 1.1.1 / DSM 467 / LMG 4362 / NCIMB 8255 / S1).